We begin with the raw amino-acid sequence, 248 residues long: Ribosomal RNA small subunit methyltransferase A (248 aa).

S-adenosyl-L-methionine is bound by residues H11, L13, G38, E60, D83, and N101.

The protein belongs to the class I-like SAM-binding methyltransferase superfamily. rRNA adenine N(6)-methyltransferase family. RsmA subfamily.

The protein localises to the cytoplasm. It carries out the reaction adenosine(1518)/adenosine(1519) in 16S rRNA + 4 S-adenosyl-L-methionine = N(6)-dimethyladenosine(1518)/N(6)-dimethyladenosine(1519) in 16S rRNA + 4 S-adenosyl-L-homocysteine + 4 H(+). Functionally, specifically dimethylates two adjacent adenosines (A1518 and A1519) in the loop of a conserved hairpin near the 3'-end of 16S rRNA in the 30S particle. May play a critical role in biogenesis of 30S subunits. This Aquifex aeolicus (strain VF5) protein is Ribosomal RNA small subunit methyltransferase A.